The chain runs to 395 residues: S-adenosylmethionine synthase (395 aa).

Residue H14 participates in ATP binding. A Mg(2+)-binding site is contributed by D16. E42 contributes to the K(+) binding site. Residues E55 and Q98 each contribute to the L-methionine site. The flexible loop stretch occupies residues 98-108 (QSPDIALGVDK). ATP is bound by residues 175–177 (DGK), 242–243 (RF), D251, 257–258 (RK), A274, and K278. Residue D251 coordinates L-methionine. An L-methionine-binding site is contributed by K282.

This sequence belongs to the AdoMet synthase family. Homotetramer; dimer of dimers. Mg(2+) serves as cofactor. It depends on K(+) as a cofactor.

The protein resides in the cytoplasm. The catalysed reaction is L-methionine + ATP + H2O = S-adenosyl-L-methionine + phosphate + diphosphate. It participates in amino-acid biosynthesis; S-adenosyl-L-methionine biosynthesis; S-adenosyl-L-methionine from L-methionine: step 1/1. In terms of biological role, catalyzes the formation of S-adenosylmethionine (AdoMet) from methionine and ATP. The overall synthetic reaction is composed of two sequential steps, AdoMet formation and the subsequent tripolyphosphate hydrolysis which occurs prior to release of AdoMet from the enzyme. The chain is S-adenosylmethionine synthase from Thermosipho africanus (strain TCF52B).